Reading from the N-terminus, the 288-residue chain is Phosphatidylserine decarboxylase proenzyme (288 aa).

Catalysis depends on charge relay system; for autoendoproteolytic cleavage activity residues D92, H149, and S254. S254 serves as the catalytic Schiff-base intermediate with substrate; via pyruvic acid; for decarboxylase activity. S254 is subject to Pyruvic acid (Ser); by autocatalysis.

Belongs to the phosphatidylserine decarboxylase family. PSD-B subfamily. Prokaryotic type I sub-subfamily. As to quaternary structure, heterodimer of a large membrane-associated beta subunit and a small pyruvoyl-containing alpha subunit. Pyruvate serves as cofactor. Post-translationally, is synthesized initially as an inactive proenzyme. Formation of the active enzyme involves a self-maturation process in which the active site pyruvoyl group is generated from an internal serine residue via an autocatalytic post-translational modification. Two non-identical subunits are generated from the proenzyme in this reaction, and the pyruvate is formed at the N-terminus of the alpha chain, which is derived from the carboxyl end of the proenzyme. The autoendoproteolytic cleavage occurs by a canonical serine protease mechanism, in which the side chain hydroxyl group of the serine supplies its oxygen atom to form the C-terminus of the beta chain, while the remainder of the serine residue undergoes an oxidative deamination to produce ammonia and the pyruvoyl prosthetic group on the alpha chain. During this reaction, the Ser that is part of the protease active site of the proenzyme becomes the pyruvoyl prosthetic group, which constitutes an essential element of the active site of the mature decarboxylase.

It localises to the cell membrane. It carries out the reaction a 1,2-diacyl-sn-glycero-3-phospho-L-serine + H(+) = a 1,2-diacyl-sn-glycero-3-phosphoethanolamine + CO2. The protein operates within phospholipid metabolism; phosphatidylethanolamine biosynthesis; phosphatidylethanolamine from CDP-diacylglycerol: step 2/2. Functionally, catalyzes the formation of phosphatidylethanolamine (PtdEtn) from phosphatidylserine (PtdSer). The chain is Phosphatidylserine decarboxylase proenzyme from Bordetella petrii (strain ATCC BAA-461 / DSM 12804 / CCUG 43448).